Consider the following 473-residue polypeptide: Glutamyl-tRNA reductase (473 aa).

Residues 49–52 (TCNR), Ser109, 114–116 (EQQ), and Gln120 contribute to the substrate site. Residue Cys50 is the Nucleophile of the active site. NADP(+) is bound at residue 189 to 194 (GAGSMG). The tract at residues 445-473 (SGLDAGSGPQGADGPSAGPTPSAPNPSAE) is disordered.

Belongs to the glutamyl-tRNA reductase family. Homodimer.

The catalysed reaction is (S)-4-amino-5-oxopentanoate + tRNA(Glu) + NADP(+) = L-glutamyl-tRNA(Glu) + NADPH + H(+). Its pathway is porphyrin-containing compound metabolism; protoporphyrin-IX biosynthesis; 5-aminolevulinate from L-glutamyl-tRNA(Glu): step 1/2. Functionally, catalyzes the NADPH-dependent reduction of glutamyl-tRNA(Glu) to glutamate 1-semialdehyde (GSA). In Mycobacterium ulcerans (strain Agy99), this protein is Glutamyl-tRNA reductase.